The sequence spans 114 residues: Cytokine SCM-1 beta (114 aa).

Residues 1–21 form the signal peptide; that stretch reads MRLLILALLGICSLTAYIVEG. Cys-32 and Cys-69 form a disulfide bridge. The segment at 91–114 is disordered; it reads RNNMIQTKPTGTQQSTNTAVTLTG.

Belongs to the intercrine gamma family.

It localises to the secreted. Functionally, chemotactic activity for lymphocytes but not for monocytes or neutrophils. This Homo sapiens (Human) protein is Cytokine SCM-1 beta (XCL2).